The sequence spans 414 residues: tRNA(Ile)-lysidine synthase (414 aa).

17-22 (SGGCDS) is a binding site for ATP.

It belongs to the tRNA(Ile)-lysidine synthase family.

It is found in the cytoplasm. It carries out the reaction cytidine(34) in tRNA(Ile2) + L-lysine + ATP = lysidine(34) in tRNA(Ile2) + AMP + diphosphate + H(+). Ligates lysine onto the cytidine present at position 34 of the AUA codon-specific tRNA(Ile) that contains the anticodon CAU, in an ATP-dependent manner. Cytidine is converted to lysidine, thus changing the amino acid specificity of the tRNA from methionine to isoleucine. This chain is tRNA(Ile)-lysidine synthase, found in Exiguobacterium sibiricum (strain DSM 17290 / CCUG 55495 / CIP 109462 / JCM 13490 / 255-15).